Consider the following 246-residue polypeptide: Probable septum site-determining protein MinC (246 aa).

Residues 116 to 140 are disordered; the sequence is AAVSPPPPPPARAEPAPPAARPAPG. Residues 119 to 136 show a composition bias toward pro residues; the sequence is SPPPPPPARAEPAPPAAR.

Belongs to the MinC family. In terms of assembly, interacts with MinD and FtsZ.

Its function is as follows. Cell division inhibitor that blocks the formation of polar Z ring septums. Rapidly oscillates between the poles of the cell to destabilize FtsZ filaments that have formed before they mature into polar Z rings. Prevents FtsZ polymerization. The chain is Probable septum site-determining protein MinC from Xanthomonas oryzae pv. oryzae (strain MAFF 311018).